The sequence spans 719 residues: Leucine-rich repeat and fibronectin type-III domain-containing protein 5 (719 aa).

Positions 1 to 17 are cleaved as a signal peptide; that stretch reads MEKILFYLFLIGIAVKA. Residues 18–51 enclose the LRRNT domain; that stretch reads QICPKRCVCQILSPNLATLCAKKGLLFVPPNIDR. Topologically, residues 18–529 are extracellular; the sequence is QICPKRCVCQ…MQSQFLGGTM (512 aa). LRR repeat units lie at residues 52–73, 76–97, 100–121, 124–145, 148–169, 172–193, and 196–217; these read RTVE…DFAN, SLVD…AFAD, NLRA…MFSG, NLHH…AFDD, ALEE…AVEK, SLHT…TFSH, and KMTR…PLFQ. Asn73 is a glycosylation site (N-linked (GlcNAc...) asparagine). The 47-residue stretch at 240–286 folds into the LRRCT domain; that stretch reads NPLHCNCELLWLRRLSREDDLETCASPPLLTGRYFWSIPEEEFLCEP. The 87-residue stretch at 287–373 folds into the Ig-like domain; the sequence is PLITRHTHEM…GEATQIVDLH (87 aa). Cys308 and Cys357 form a disulfide bridge. Residues Asn330, Asn339, Asn382, Asn406, and Asn452 are each glycosylated (N-linked (GlcNAc...) asparagine). Residues 385–414 form a disordered region; it reads NHIHEPDPGSSDISTSTKSGSNTSSSNGDT. The segment covering 393 to 414 has biased composition (low complexity); sequence GSSDISTSTKSGSNTSSSNGDT. Residues 414–503 enclose the Fibronectin type-III domain; sequence TKLSQDKIVV…ITSLTATRVV (90 aa). A helical transmembrane segment spans residues 530–550; it reads IIIIGGIIVASVLVFIIILMI. Topologically, residues 551 to 719 are cytoplasmic; sequence RYKVCNNNGQ…VQETQRLELI (169 aa). The segment covering 615–627 has biased composition (low complexity); it reads ETCSSQDSSTTTS. Residues 615-694 are disordered; sequence ETCSSQDSST…SVTEGPTSKR (80 aa). Polar residues-rich tracts occupy residues 628 to 641 and 649 to 677; these read ALPP…SVSQ and TKPS…TALQ.

It belongs to the LRFN family. Can form heteromeric complexes with LRFN1, LRFN2, LRFN3 and LFRN4. Able to form homomeric complexes across cell junctions, between adjacent cells. Does not interact with DLG1, DLG2, DLG3 and DLG4.

It localises to the membrane. Cell adhesion molecule that mediates homophilic cell-cell adhesion in a Ca(2+)-independent manner. Promotes neurite outgrowth in hippocampal neurons. This chain is Leucine-rich repeat and fibronectin type-III domain-containing protein 5 (LRFN5), found in Homo sapiens (Human).